Consider the following 329-residue polypeptide: Transposable element Tc3 transposase (329 aa).

The DNA-binding element occupies 2–135 (PRGSALSDTE…LEFAKNNMGT (134 aa)).

The protein belongs to the transposase 5 family. Homodimer or homotetramer.

Its subcellular location is the nucleus. Its function is as follows. Binds specifically to the terminal nucleotides of the TC3 inverted repeat. Its expression results in frequent excision and transposition of endogenous TC3 elements. TC3 transposase acts by making double strand breaks at the ends of TC3 element. The excised element would then be inserted into a target sequence. The protein is Transposable element Tc3 transposase (tc3a) of Caenorhabditis elegans.